We begin with the raw amino-acid sequence, 354 residues long: Guanine nucleotide-binding protein G(i) subunit alpha (354 aa).

The N-myristoyl glycine moiety is linked to residue glycine 2. A lipid anchor (S-palmitoyl cysteine) is attached at cysteine 3. Positions 32-354 (REVKLLLLGA…KNNLKDCGLF (323 aa)) constitute a G-alpha domain. Residues 35 to 48 (KLLLLGAGESGKST) form a G1 motif region. GTP contacts are provided by residues 40 to 47 (GAGESGKS), 175 to 181 (LRTRVKT), 200 to 204 (DVGGQ), 269 to 272 (NKKD), and alanine 326. The Mg(2+) site is built by serine 47 and threonine 181. The tract at residues 173-181 (DVLRTRVKT) is G2 motif. The segment at 196-205 (FKMFDVGGQR) is G3 motif. The segment at 265-272 (ILFLNKKD) is G4 motif. The segment at 324–329 (TCATDT) is G5 motif.

Belongs to the G-alpha family. G(i/o/t/z) subfamily. As to quaternary structure, g proteins are composed of 3 units; alpha, beta and gamma. The alpha chain contains the guanine nucleotide binding site.

Its function is as follows. Guanine nucleotide-binding proteins (G proteins) are involved as modulators or transducers in various transmembrane signaling systems. This G protein is involved in 1-methyladenine-induced oocyte maturation. This Patiria pectinifera (Starfish) protein is Guanine nucleotide-binding protein G(i) subunit alpha.